The chain runs to 157 residues: Large ribosomal subunit protein uL11 (157 aa).

Belongs to the universal ribosomal protein uL11 family. Part of the ribosomal stalk of the 50S ribosomal subunit. Interacts with L10 and the large rRNA to form the base of the stalk. L10 forms an elongated spine to which L12 dimers bind in a sequential fashion forming a multimeric L10(L12)X complex.

In terms of biological role, forms part of the ribosomal stalk which helps the ribosome interact with GTP-bound translation factors. This is Large ribosomal subunit protein uL11 from Methanocorpusculum labreanum (strain ATCC 43576 / DSM 4855 / Z).